A 24-amino-acid polypeptide reads, in one-letter code: Humanin-like 7 (24 aa).

It belongs to the humanin family. In terms of tissue distribution, expressed in testis.

It localises to the secreted. It is found in the cytoplasm. In terms of biological role, plays a role as a neuroprotective and antiapoptotic factor. The polypeptide is Humanin-like 7 (Homo sapiens (Human)).